Consider the following 169-residue polypeptide: MKKTIIVFIILAFMLNCKNKSNDAEPNNDLDEKSQAKSNLVDEDRIEFSKATPLEKLVSRLNLNNTEKETLTFLTNLLKEKLVDPNIGLHFKNSGGDESKIEESVQKFLSELKEDEIKDLLAKIKENKDKKEKDPEELNTYKSILASGFDGIFNQADSKTTLNKLKDTI.

The protein resides in the cell outer membrane. The polypeptide is Putative outer membrane protein BBA03 (Borreliella burgdorferi (strain ATCC 35210 / DSM 4680 / CIP 102532 / B31) (Borrelia burgdorferi)).